The sequence spans 500 residues: NAD(P)H-quinone oxidoreductase chain 4, chloroplastic (500 aa).

Transmembrane regions (helical) follow at residues 4-24 (FPWL…IFFL), 35-55 (YTIC…CYHF), 87-107 (IGPI…AWPV), 134-154 (LLLF…LLAM), 167-187 (FILY…GVAL), 208-228 (VLEI…SPII), 242-262 (HYST…YGLI), 272-292 (AHSI…IYAA), 305-325 (IAYP…SLTD), 330-350 (GALL…FLAG), 386-406 (LALP…GIIT), 411-431 (LLIP…LTPI), and 462-482 (LFLS…PDFV).

This sequence belongs to the complex I subunit 4 family.

Its subcellular location is the plastid. The protein resides in the chloroplast thylakoid membrane. The catalysed reaction is a plastoquinone + NADH + (n+1) H(+)(in) = a plastoquinol + NAD(+) + n H(+)(out). It carries out the reaction a plastoquinone + NADPH + (n+1) H(+)(in) = a plastoquinol + NADP(+) + n H(+)(out). This is NAD(P)H-quinone oxidoreductase chain 4, chloroplastic from Solanum tuberosum (Potato).